Consider the following 184-residue polypeptide: GMP synthase [glutamine-hydrolyzing] subunit A (184 aa).

Residues 3-184 (HIAVIDNHGQ…VFKNFIARCQ (182 aa)) enclose the Glutamine amidotransferase type-1 domain. Cysteine 75 functions as the Nucleophile in the catalytic mechanism. Residues histidine 163 and glutamate 165 contribute to the active site.

Heterodimer composed of a glutamine amidotransferase subunit (A) and a GMP-binding subunit (B).

It catalyses the reaction XMP + L-glutamine + ATP + H2O = GMP + L-glutamate + AMP + diphosphate + 2 H(+). The protein operates within purine metabolism; GMP biosynthesis; GMP from XMP (L-Gln route): step 1/1. In terms of biological role, catalyzes the synthesis of GMP from XMP. In Haloquadratum walsbyi (strain DSM 16790 / HBSQ001), this protein is GMP synthase [glutamine-hydrolyzing] subunit A.